Consider the following 129-residue polypeptide: Small ribosomal subunit protein uS11 (129 aa).

It belongs to the universal ribosomal protein uS11 family. Part of the 30S ribosomal subunit. Interacts with proteins S7 and S18. Binds to IF-3.

Located on the platform of the 30S subunit, it bridges several disparate RNA helices of the 16S rRNA. Forms part of the Shine-Dalgarno cleft in the 70S ribosome. In Pseudomonas fluorescens (strain ATCC BAA-477 / NRRL B-23932 / Pf-5), this protein is Small ribosomal subunit protein uS11.